We begin with the raw amino-acid sequence, 303 residues long: MPSFDFDIPRRSPQEIAKGMVAIPGGTFRMGGEDPDAFPEDGEGPVRTVRLSPFLIDRYAVSNRQFAAFVKATGYVTDAERYGWSFVFHAHVAPGTPVMDAVVPEAPWWVAVPGAYWKAPEGPGSSITDRPNHPVVHVSWNDAVAYATWAGKRLPTEAEWEMAARGGLDQARYPWGNELTPRGRHRCNIWQGTFPVHDTGEDGYTGTAPVNAFAPNGYGLYNVAGNVWEWCADWWSADWHATESPATRIDPRGPETGTARVTKGGSFLCHESYCNRYRVAARTCNTPDSSAAHTGFRCAADPL.

N188, I189, D202, Y204, N222, V223, G225, and V227 together coordinate Ca(2+). Cu(+) is bound by residues C269 and C274.

It belongs to the sulfatase-modifying factor family. Requires Cu(+) as cofactor.

It carries out the reaction L-cysteinyl-[sulfatase] + 2 a thiol + O2 = an organic disulfide + 3-oxo-L-alanyl-[sulfatase] + hydrogen sulfide + H2O + H(+). The protein operates within protein modification; sulfatase oxidation. Functionally, oxidase that catalyzes the conversion of cysteine to 3-oxoalanine on target proteins. 3-oxoalanine modification, which is also named formylglycine (fGly), occurs in the maturation of arylsulfatases and some alkaline phosphatases that use the hydrated form of 3-oxoalanine as a catalytic nucleophile. The chain is Formylglycine-generating enzyme from Thermomonospora curvata (strain ATCC 19995 / DSM 43183 / JCM 3096 / KCTC 9072 / NBRC 15933 / NCIMB 10081 / Henssen B9).